A 348-amino-acid chain; its full sequence is Protein RecA (348 aa).

Residue 65 to 72 (GPESSGKT) coordinates ATP.

It belongs to the RecA family.

It localises to the cytoplasm. In terms of biological role, can catalyze the hydrolysis of ATP in the presence of single-stranded DNA, the ATP-dependent uptake of single-stranded DNA by duplex DNA, and the ATP-dependent hybridization of homologous single-stranded DNAs. It interacts with LexA causing its activation and leading to its autocatalytic cleavage. The protein is Protein RecA of Vibrio natriegens.